Consider the following 93-residue polypeptide: Small ribosomal subunit protein uS19 (93 aa).

The protein belongs to the universal ribosomal protein uS19 family.

Its function is as follows. Protein S19 forms a complex with S13 that binds strongly to the 16S ribosomal RNA. This is Small ribosomal subunit protein uS19 from Mycobacterium sp. (strain JLS).